The sequence spans 247 residues: uncharacterized protein (247 aa).

Low complexity-rich tracts occupy residues 1-12 and 21-43; these read MFSPQQPMRNYP and PNQRMMGRRPPNMRGPSFGAQQQ. Disordered regions lie at residues 1 to 43 and 157 to 247; these read MFSP…AQQQ and LSKS…RLYI. 2 stretches are compositionally biased toward basic and acidic residues: residues 170-196 and 210-229; these read ESEKQSVSEESSEKEKETETKTSDGNK and KTTDNKEQELKTSAPKKKEA.

This is an uncharacterized protein from Bacillus subtilis (strain 168).